Consider the following 189-residue polypeptide: Hypoxanthine/guanine phosphoribosyltransferase (189 aa).

This sequence belongs to the purine/pyrimidine phosphoribosyltransferase family. Archaeal HPRT subfamily. As to quaternary structure, homodimer.

The protein resides in the cytoplasm. It carries out the reaction IMP + diphosphate = hypoxanthine + 5-phospho-alpha-D-ribose 1-diphosphate. The enzyme catalyses GMP + diphosphate = guanine + 5-phospho-alpha-D-ribose 1-diphosphate. It functions in the pathway purine metabolism; IMP biosynthesis via salvage pathway; IMP from hypoxanthine: step 1/1. Catalyzes a salvage reaction resulting in the formation of IMP that is energically less costly than de novo synthesis. The polypeptide is Hypoxanthine/guanine phosphoribosyltransferase (Methanosarcina mazei (strain ATCC BAA-159 / DSM 3647 / Goe1 / Go1 / JCM 11833 / OCM 88) (Methanosarcina frisia)).